The chain runs to 559 residues: Large neutral amino acids transporter small subunit 3 (559 aa).

Residues 20 to 40 (VLENLFFSAVLLGWGSLLIIL) form a helical membrane-spanning segment. The N-linked (GlcNAc...) asparagine glycan is linked to Asn-57. 5 helical membrane-spanning segments follow: residues 78-98 (LGFTIGSFVLSATTLPLGILM), 105-124 (PVRLVGSACFTASCTLMALA), 131-151 (LSPLIFLALSLNGFGGICLTF), 168-188 (MALMIGSYASSAITFPGIKLI), and 191-211 (AGVAFVVIMFTWSGLACLIFL). N-linked (GlcNAc...) asparagine glycosylation is found at Asn-212 and Asn-229. Ser-237, Ser-262, and Ser-267 each carry phosphoserine. The next 6 helical transmembrane spans lie at 304–324 (FLWSLLTMGMTQLRIIFYMAA), 357–377 (SVFGAMQLLCLLTCPLIGYIM), 419–439 (AISAFTLTNLLLVGFGITCLI), 446–466 (FVTFVLHTIVRGFFHSACGSL), 485–505 (LISAVFALLQQPLFMAMVGPL), and 510–530 (FWVNLGLLLFSLLGFLLPSYL).

Belongs to the SLC43A transporter (TC 2.A.1.44) family. As to expression, ubiquitously expressed in fetus and adult. Highest expression in adult pancreas, liver, skeletal muscle. In fetus, highest expression in liver and lower levels in kidney, and lung. Exclusively expressed in the glomeruli along the glomerular capillary walls.

The protein resides in the cell membrane. It is found in the apical cell membrane. The protein localises to the endoplasmic reticulum membrane. It catalyses the reaction D-leucine(in) = D-leucine(out). It carries out the reaction L-leucine(in) = L-leucine(out). The enzyme catalyses L-isoleucine(in) = L-isoleucine(out). The catalysed reaction is L-methionine(in) = L-methionine(out). It catalyses the reaction L-phenylalanine(in) = L-phenylalanine(out). It carries out the reaction L-valine(in) = L-valine(out). Functionally, uniport that mediates the transport of neutral amino acids such as L-leucine, L-isoleucine, L-valine, and L-phenylalanine. The transport activity is sodium ions-independent, electroneutral and mediated by a facilitated diffusion. The sequence is that of Large neutral amino acids transporter small subunit 3 from Homo sapiens (Human).